A 176-amino-acid polypeptide reads, in one-letter code: SDIAKDKAARLLKKRGSISSLGSHDVKPRGSFSKTKDSVSTVSYIDEPGHHDDIQRPAILVENTYQMGPTKRFPVASVNNILKDVLTSYLQEEKYEAELCRQMTKTISEVIKARVKDLMIPRYKIIVLIYIGQLNDQGMRVGSRCIWDPANDTFSSYSFKNSSLFALANVYGVYYE.

It belongs to the dynein light chain Tctex-type family.

The polypeptide is Dynein light chain Tctex-type 5-B (Dynlt5-b) (Xenopus laevis (African clawed frog)).